Reading from the N-terminus, the 721-residue chain is MTSKEKIPTFNTEEDVESYISFNAQAKIYDDFAIDLQAVESYIQEHVKPKTKVFHSTKERLDFLIKNDYYDEKIINMYSFEQFEEITHKAYSYRFRYANFMGAFKFYNAYALKTFDGKYYLENYEDRVVMNVLMLANGNFNKALKLLKQIILNRFQPATPTFLNAGRKKRGEFVSCYLLRIEDNMESIGRAITTTLQLSKRDGGVALLLSNLREAGAPIKKIENQSSGIIPIMKLLEDSFSYSNQLGQRQGAGAVYLHCHHPDVMQFLDTKRENADEKIRIKSLSLGLVIPDITFQLAKNNEMMALFSPYDIYQEYGKALSDISVTEMYYELLENQRIKKTFISARKFFQTIAELHFESGYPYILFDDTVNRRNAHKNRIVMSNLCSEIVQPSLPSEFYSDLTFKKVGSDISCNLGSLNIARAMESGSELAELIQLAIESLDLVSRISSLETAPSIKKGNSENHALGLGAMNLHGFLATNAIYYDSKEAVDFTNIFFYTVAYHAFSASNKLALELGKFKDFENTKFADGSYFDKYTKVASDFWTCKTEKVQALFDKYQVKIPTQENWKQLVASIQKDGLANSHLMAIAPTGSISYLSSCTPSLQPVVSPVEVRKEGKLGRIYVPAYKLDNDNYQYFKDGAYELGFEPIINIVAAAQQHVDQAISLTLFMTDKATTRDLNKAYIYAFKKGCSSIYYVRVRQDVLKDSEDHTIKIKDCEVCSI.

Substrate is bound by residues T159, S175–C176, G204, N384–E388, and P589–I593. Residues C176 and C413 are joined by a disulfide bond. The active-site Proton acceptor is the N384. The active-site Cysteine radical intermediate is the C386. E388 serves as the catalytic Proton acceptor.

The protein belongs to the ribonucleoside diphosphate reductase large chain family. Tetramer of two alpha and two beta subunits.

The enzyme catalyses a 2'-deoxyribonucleoside 5'-diphosphate + [thioredoxin]-disulfide + H2O = a ribonucleoside 5'-diphosphate + [thioredoxin]-dithiol. With respect to regulation, under complex allosteric control mediated by deoxynucleoside triphosphates and ATP binding. The type of nucleotide bound at the specificity site determines substrate preference. It seems probable that ATP makes the enzyme reduce CDP and UDP, dGTP favors ADP reduction and dTTP favors GDP reduction. Its function is as follows. Provides the precursors necessary for DNA synthesis. Catalyzes the biosynthesis of deoxyribonucleotides from the corresponding ribonucleotides. The polypeptide is Ribonucleoside-diphosphate reductase subunit alpha (nrdE) (Mycoplasma genitalium (strain ATCC 33530 / DSM 19775 / NCTC 10195 / G37) (Mycoplasmoides genitalium)).